The chain runs to 358 residues: Putative pyruvyl transferase EpsI (358 aa).

This sequence belongs to the polysaccharide pyruvyl transferase family.

May be involved in the production of the exopolysaccharide (EPS) component of the extracellular matrix during biofilm formation. EPS is responsible for the adhesion of chains of cells into bundles. The protein is Putative pyruvyl transferase EpsI (epsI) of Bacillus subtilis (strain 168).